A 166-amino-acid polypeptide reads, in one-letter code: uncharacterized protein (166 aa).

The segment at 25-116 is disordered; it reads PEEPPLWVPP…QGADEVHSQH (92 aa). Serine 105 carries the phosphoserine modification.

This is an uncharacterized protein from Rattus norvegicus (Rat).